A 262-amino-acid chain; its full sequence is Small ribosomal subunit protein eS1 (262 aa).

Belongs to the eukaryotic ribosomal protein eS1 family. Component of the small ribosomal subunit. Mature ribosomes consist of a small (40S) and a large (60S) subunit. The 40S subunit contains about 33 different proteins and 1 molecule of RNA (18S). The 60S subunit contains about 49 different proteins and 3 molecules of RNA (25S, 5.8S and 5S).

Its subcellular location is the cytoplasm. The polypeptide is Small ribosomal subunit protein eS1 (Theileria annulata).